Reading from the N-terminus, the 421-residue chain is Stemmadenine O-acetyltransferase (421 aa).

Residues 1-21 (MAPQMQILSEELIQPSSPTPQ) are disordered. Residues His160 and Asp362 each act as proton acceptor in the active site.

Belongs to the plant acyltransferase family. In terms of assembly, monomer. As to expression, expressed in leaf epidermis.

The catalysed reaction is 15alpha-stemmadenine + acetyl-CoA = O-acetyl-15alpha-stemmadenine + CoA. Its pathway is alkaloid biosynthesis. Component of iboga and aspidosperma monoterpenoid indole alkaloids (MIAs, e.g. tabersonine and catharanthine) biosynthesis pathway from 19E-geissoschizine. Acetyltransferase that catalyzes the formation of O-acetylstemmadenine from stemmadenine. This Catharanthus roseus (Madagascar periwinkle) protein is Stemmadenine O-acetyltransferase.